We begin with the raw amino-acid sequence, 348 residues long: Glycerol-1-phosphate dehydrogenase [NAD(P)+] (348 aa).

NAD(+)-binding positions include 94–98 and Thr-116; that span reads GKVID. Residue Asp-121 participates in substrate binding. Ser-125 is a binding site for NAD(+). Asp-168 is a binding site for substrate. Zn(2+)-binding residues include Asp-168 and His-248. Position 252 (His-252) interacts with substrate. A Zn(2+)-binding site is contributed by His-264.

It belongs to the glycerol-1-phosphate dehydrogenase family. Homooctamer. Zn(2+) serves as cofactor.

Its subcellular location is the cytoplasm. It carries out the reaction sn-glycerol 1-phosphate + NAD(+) = dihydroxyacetone phosphate + NADH + H(+). The enzyme catalyses sn-glycerol 1-phosphate + NADP(+) = dihydroxyacetone phosphate + NADPH + H(+). It functions in the pathway membrane lipid metabolism; glycerophospholipid metabolism. Functionally, catalyzes the NAD(P)H-dependent reduction of dihydroxyacetonephosphate (DHAP or glycerone phosphate) to glycerol 1-phosphate (G1P). The G1P thus generated is used as the glycerophosphate backbone of phospholipids in the cellular membranes of Archaea. In Methanosphaera stadtmanae (strain ATCC 43021 / DSM 3091 / JCM 11832 / MCB-3), this protein is Glycerol-1-phosphate dehydrogenase [NAD(P)+].